Here is a 550-residue protein sequence, read N- to C-terminus: Glucose-6-phosphate isomerase 3 (550 aa).

The Proton donor role is filled by glutamate 357. Residues histidine 388 and lysine 514 contribute to the active site.

Belongs to the GPI family.

It localises to the cytoplasm. It carries out the reaction alpha-D-glucose 6-phosphate = beta-D-fructose 6-phosphate. Its pathway is carbohydrate biosynthesis; gluconeogenesis. It functions in the pathway carbohydrate degradation; glycolysis; D-glyceraldehyde 3-phosphate and glycerone phosphate from D-glucose: step 2/4. Functionally, catalyzes the reversible isomerization of glucose-6-phosphate to fructose-6-phosphate. This chain is Glucose-6-phosphate isomerase 3, found in Rhodococcus jostii (strain RHA1).